The chain runs to 380 residues: Cytochrome b (380 aa).

The next 4 helical transmembrane spans lie at 34–54 (FGSLLGICLTTQILTGLLLAM), 78–99 (WLIRNIHANGASFFFICIYLHI), 114–134 (WNTGILLLLTLMATAFVGYVL), and 179–199 (FFALHFLLPFMIAGLTLIHLT). Residues His-84 and His-98 each coordinate heme b. Heme b-binding residues include His-183 and His-197. His-202 is an a ubiquinone binding site. Helical transmembrane passes span 227-247 (LKDTLGFMLMLLPLTTLALFS), 289-309 (LGGVLALAASVLILFLSPLLH), 321-341 (LSQLLFWILIANLFILTWVGS), and 348-368 (FIIIGQLASLTYFTILLILLP).

The protein belongs to the cytochrome b family. In terms of assembly, the cytochrome bc1 complex contains 11 subunits: 3 respiratory subunits (MT-CYB, CYC1 and UQCRFS1), 2 core proteins (UQCRC1 and UQCRC2) and 6 low-molecular weight proteins (UQCRH/QCR6, UQCRB/QCR7, UQCRQ/QCR8, UQCR10/QCR9, UQCR11/QCR10 and a cleavage product of UQCRFS1). This cytochrome bc1 complex then forms a dimer. The cofactor is heme b.

It is found in the mitochondrion inner membrane. Component of the ubiquinol-cytochrome c reductase complex (complex III or cytochrome b-c1 complex) that is part of the mitochondrial respiratory chain. The b-c1 complex mediates electron transfer from ubiquinol to cytochrome c. Contributes to the generation of a proton gradient across the mitochondrial membrane that is then used for ATP synthesis. This Fregetta tropica (Black-bellied storm-petrel) protein is Cytochrome b (MT-CYB).